Here is an 86-residue protein sequence, read N- to C-terminus: Kappa-theraphotoxin-Cg1a 4 (86 aa).

The N-terminal stretch at 1-21 (MKASVLITLAVLGVMFVWASA) is a signal peptide. Positions 22 to 50 (AELEERGSDQRDSPAWLKSMERIFQSEER) are excised as a propeptide. 3 cysteine pairs are disulfide-bonded: cysteine 52/cysteine 66, cysteine 59/cysteine 71, and cysteine 65/cysteine 78. Position 84 is a phenylalanine amide (phenylalanine 84).

It belongs to the neurotoxin 10 (Hwtx-1) family. 28 (Jztx-11) subfamily. Expressed by the venom gland.

Its subcellular location is the secreted. This toxin acts as a voltage-dependent gating-modifier. It inhibits the sodium conductance (IC(50)=124 nM) and slows the fast inactivation (EC(50)=1180 nM) of Nav1.5/SCN5A. It significantly shifts the activation to more depolarized voltages and decreases the deactivation of Nav1.5 currents upon extreme depolarization, but only slightly affects voltage-dependence of steady-state inactivation. In addition, this toxin causes an approximately five-fold decrease in the rate of recovery from inactivation and an approximately 1.9-fold reduction in the closed-state inactivation rate. This toxin integrates the functions of site 3 toxins (alpha-scorpion toxins) with site 4 toxins (beta-scorpion and spider toxins) by targeting multiple sites on Nav1.5. Also shows inhibition of voltage-gated potassium channels (5 uM completely inhibits Kv2.1/KCNB1, whereas 5 uM moderately inhibits Kv4.2/KCND2 Kv4.1/KCND1 channels). This is Kappa-theraphotoxin-Cg1a 4 from Chilobrachys guangxiensis (Chinese earth tiger tarantula).